The primary structure comprises 479 residues: Ribosomal RNA small subunit methyltransferase F (479 aa).

Residues 125–131 (AAAPGSK), E149, D176, and D194 contribute to the S-adenosyl-L-methionine site. C247 acts as the Nucleophile in catalysis.

This sequence belongs to the class I-like SAM-binding methyltransferase superfamily. RsmB/NOP family.

The protein resides in the cytoplasm. The enzyme catalyses cytidine(1407) in 16S rRNA + S-adenosyl-L-methionine = 5-methylcytidine(1407) in 16S rRNA + S-adenosyl-L-homocysteine + H(+). In terms of biological role, specifically methylates the cytosine at position 1407 (m5C1407) of 16S rRNA. This is Ribosomal RNA small subunit methyltransferase F from Shigella boydii serotype 4 (strain Sb227).